A 533-amino-acid polypeptide reads, in one-letter code: Lymphocyte cytosolic protein 2 (533 aa).

The SAM domain maps to 12–78; that stretch reads VLAWNSDNLA…SQDINKNEER (67 aa). Tyrosine 23 carries the post-translational modification Phosphotyrosine. Disordered regions lie at residues 78 to 359 and 374 to 419; these read RRSI…PLAH and SASL…TPLD. Positions 94 to 144 are enriched in acidic residues; sequence ETESHEEDDGGWSSFEDDYESPNDDDPDGEDDGDYESPNEEEQALVDDAAD. Polar residues predominate over residues 151 to 172; sequence NNEEALQSSILPPNSFHNTNSM. Residues 186-201 show a composition bias toward pro residues; that stretch reads PPVPPLRPKPALPPLP. 2 positions are modified to phosphoserine: serine 207 and serine 210. The segment covering 340–354 has biased composition (polar residues); sequence NTFPSRSVQPSSKNT. Phosphoserine occurs at positions 376 and 410. Over residues 400–411 the composition is skewed to pro residues; that stretch reads LPVPNRPQPPSP. The SH2 domain maps to 422–530; the sequence is WYVSYITRPE…RYQCTLTHAA (109 aa).

As to quaternary structure, interacts with SLA. Interacts with CBLB. Interacts with GRB2. Interacts with SHB. Interacts with PRAM1. Interacts (via SH2 domain) with CD6 (via tyrosine phosphorylated C-terminus). Interacts with FYB1 and the phosphorylated form of FYB2. Interacts with 14-3-3 adapter/YWHAZ; this phosphorylation leads to YWHAZ proteolytic degradation. Interacts with VAV1; this interaction plays a role in TCR-mediated cytokine production. Interacts with AGER; this interaction plays an important role in AGER-mediated pro-inflammatory responses and cytokine release. Phosphorylated after T-cell receptor activation by ZAP70, ITK and TXK, which leads to the up-regulation of Th1 preferred cytokine IL-2. SYK-dependent phosphorylation is required for recruitment of PI3K signaling components. Highly expressed in spleen, thymus, and peripheral blood leukocytes.

It localises to the cytoplasm. Functionally, adapter protein primarily involved in signaling pathways within T-cells, as well as other immune cells such as platelets, mast cells, and natural killer (NK) cells. Plays a crucial role for transducing signal from the T-cell receptor (TCR) after antigen recognition leading to T-cell activation. Mechanistically, once phosphorylated by the kinase ZAP70, mediates interactions with the guanine-nucleotide exchange factor VAV1, the adapter protein NCK and the kinase ITK. In turn, stimulates the activation of PKC-theta/PRKCQ and NF-kappa-B transcriptional activity in response to CD3 and CD28 costimulation. Also plays an essential role in AGER-induced signaling pathways including p38 MAPK and ERK1/2 activation leading to cytokine release and pro-inflammatory responses. The polypeptide is Lymphocyte cytosolic protein 2 (Lcp2) (Mus musculus (Mouse)).